A 279-amino-acid chain; its full sequence is Chromatin modification-related protein EAF5 (279 aa).

The interval 147 to 179 is disordered; the sequence is QLQPHANAGKSGSAGTSATITTTTPHMAHSMDP. Residues 154–170 show a composition bias toward low complexity; the sequence is AGKSGSAGTSATITTTT.

Belongs to the EAF5 family. In terms of assembly, component of the NuA4 histone acetyltransferase complex composed of at least ACT1, ARP4, YAF9, VID21, SWC4, EAF3, EAF5, EAF6, EAF7, EPL1, ESA1, TRA1 and YNG2.

It is found in the nucleus. In terms of biological role, component of the NuA4 histone acetyltransferase complex which is involved in transcriptional activation of selected genes principally by acetylation of nucleosomal histone H4 and H2A. The NuA4 complex is also involved in DNA repair. This Saccharomyces cerevisiae (strain ATCC 204508 / S288c) (Baker's yeast) protein is Chromatin modification-related protein EAF5 (EAF5).